The primary structure comprises 432 residues: UDP-glucose 6-dehydrogenase (432 aa).

Residues 2–19 (NITF…GIIM), V11, D30, K35, T121, and E152 contribute to the NAD(+) site. Residues 148–152 (EFLRE), K202, N206, 247–251 (FLNAG), and G255 contribute to the substrate site. C258 (nucleophile) is an active-site residue. Residue K261 participates in NAD(+) binding. Residue K319 coordinates substrate. Position 326 (R326) interacts with NAD(+).

The protein belongs to the UDP-glucose/GDP-mannose dehydrogenase family.

It carries out the reaction UDP-alpha-D-glucose + 2 NAD(+) + H2O = UDP-alpha-D-glucuronate + 2 NADH + 3 H(+). It functions in the pathway nucleotide-sugar biosynthesis; UDP-alpha-D-glucuronate biosynthesis; UDP-alpha-D-glucuronate from UDP-alpha-D-glucose: step 1/1. The sequence is that of UDP-glucose 6-dehydrogenase (udg) from Rickettsia conorii (strain ATCC VR-613 / Malish 7).